A 1056-amino-acid polypeptide reads, in one-letter code: PH and SEC7 domain-containing protein 4 (1056 aa).

Residues 25 to 42 (LEPHPGECPRETCSHEDP) show a composition bias toward basic and acidic residues. Disordered stretches follow at residues 25–71 (LEPH…SGVE), 87–149 (CQEQ…QNRS), 195–239 (LPGD…QWGA), 340–362 (GAPA…APSA), 388–533 (VQPW…GDVQ), and 546–581 (LRTP…LANG). Polar residues-rich tracts occupy residues 88-99 (QEQTRATDPPES) and 128-137 (NTASPGSPVN). 3 positions are modified to phosphoserine: serine 131, serine 134, and serine 143. Over residues 207 to 220 (ENEDSGEDSSEPEG) the composition is skewed to acidic residues. Serine 413 carries the phosphoserine modification. Residues 414-423 (QDRDEREGGH) show a composition bias toward basic and acidic residues. Positions 438 to 456 (RSPASSPEPSSPESESRGP) are enriched in low complexity. 3 positions are modified to phosphoserine: serine 448, serine 469, and serine 491. 2 stretches are compositionally biased toward polar residues: residues 466–476 (QEGSPQLQHHS) and 486–502 (DASQ…QPSS). A compositionally biased stretch (basic and acidic residues) spans 504–522 (KKKEAGEAPKPGEEVKSEG). One can recognise an SEC7 domain in the interval 544–736 (ENLRTPMNSS…KALYWSIRSE (193 aa)). A compositionally biased stretch (polar residues) spans 548–567 (TPMNSSWLPGSPMPQAQSPE). The PH domain maps to 776-892 (PTYKQGILAR…WIARINLAAA (117 aa)). Positions 921 to 976 (SSLEEQHRSHENCLDAAADDLLDLQRNLPERRGRGRELEEHRLRKEYLEYEKTRYE) form a coiled coil. Residues 1004 to 1056 (AGGTREPKLSLKKSHSSPSLHQDEAPTTAKVKRNISERRTYRKIIPKRNRNQL) form a disordered region. Phosphoserine occurs at positions 1019 and 1022. Residues 1043 to 1056 (TYRKIIPKRNRNQL) show a composition bias toward basic residues.

As to expression, widely expressed. Highest levels of expression are found in placenta, pancreas, spleen, thymus and peripheral blood.

Its subcellular location is the cell membrane. It is found in the cell projection. The protein localises to the ruffle membrane. Functionally, guanine nucleotide exchange factor for ARF6 and ARL14/ARF7. Through ARL14 activation, controls the movement of MHC class II-containing vesicles along the actin cytoskeleton in dendritic cells. Involved in membrane recycling. Interacts with several phosphatidylinositol phosphate species, including phosphatidylinositol 3,4-bisphosphate, phosphatidylinositol 3,5-bisphosphate and phosphatidylinositol 4,5-bisphosphate. This is PH and SEC7 domain-containing protein 4 (PSD4) from Homo sapiens (Human).